The chain runs to 487 residues: GTPase Der (487 aa).

2 consecutive EngA-type G domains span residues 3–166 and 193–366; these read PVIA…PRDA and IKIA…QSAV. GTP is bound by residues 9 to 16, 56 to 60, 118 to 121, 199 to 206, 246 to 250, and 311 to 314; these read GRPNVGKS, DTGGI, NKID, DTAGV, and NKWD. In terms of domain architecture, KH-like spans 367 to 451; it reads TRWPTSRLTQ…PIRIEYKGGE (85 aa). A compositionally biased stretch (basic and acidic residues) spans 448 to 461; the sequence is KGGENPYEGKKNTL. A disordered region spans residues 448–487; that stretch reads KGGENPYEGKKNTLTDRQVNKKRRLMSHHKKAEKKRRDKR. Residues 467-487 are compositionally biased toward basic residues; that stretch reads NKKRRLMSHHKKAEKKRRDKR.

This sequence belongs to the TRAFAC class TrmE-Era-EngA-EngB-Septin-like GTPase superfamily. EngA (Der) GTPase family. As to quaternary structure, associates with the 50S ribosomal subunit.

GTPase that plays an essential role in the late steps of ribosome biogenesis. The protein is GTPase Der of Pseudomonas putida (strain ATCC 700007 / DSM 6899 / JCM 31910 / BCRC 17059 / LMG 24140 / F1).